Here is a 374-residue protein sequence, read N- to C-terminus: Lactoyl-CoA dehydratase subunit beta (374 aa).

This sequence belongs to the FldB/FldC dehydratase alpha/beta subunit family. As to quaternary structure, heterodimer of an alpha (LcdA) and a beta (LcdB) subunit. It depends on [4Fe-4S] cluster as a cofactor. Requires FMN as cofactor. The cofactor is riboflavin. Mg(2+) serves as cofactor.

The enzyme catalyses (R)-lactoyl-CoA = acryloyl-CoA + H2O. It catalyses the reaction (2R)-hydroxybutanoyl-CoA = (2E)-butenoyl-CoA + H2O. Its activity is regulated as follows. Activated by the LcdC protein. Involved in the acrylate pathway for the conversion of D-lactic acid to propionic acid. Catalyzes the reversible dehydration of Lactoyl-CoA and 2-hydroxybutyroyl-CoA to acryloyl-CoA and crotonyl-CoA, respectively. The sequence is that of Lactoyl-CoA dehydratase subunit beta (lcdB) from Anaerotignum propionicum (Clostridium propionicum).